We begin with the raw amino-acid sequence, 181 residues long: Inorganic pyrophosphatase (181 aa).

Substrate is bound by residues lysine 16, arginine 30, and tyrosine 42. Positions 52, 57, and 89 each coordinate Mg(2+). Tyrosine 126 contacts substrate.

Belongs to the PPase family. As to quaternary structure, homohexamer. Mg(2+) is required as a cofactor.

It localises to the cytoplasm. The enzyme catalyses diphosphate + H2O = 2 phosphate + H(+). Functionally, catalyzes the hydrolysis of inorganic pyrophosphate (PPi) forming two phosphate ions. This is Inorganic pyrophosphatase from Malacoplasma penetrans (strain HF-2) (Mycoplasma penetrans).